Consider the following 120-residue polypeptide: Large ribosomal subunit protein bL19 (120 aa).

The protein belongs to the bacterial ribosomal protein bL19 family.

In terms of biological role, this protein is located at the 30S-50S ribosomal subunit interface and may play a role in the structure and function of the aminoacyl-tRNA binding site. The sequence is that of Large ribosomal subunit protein bL19 from Marinomonas sp. (strain MWYL1).